A 219-amino-acid chain; its full sequence is Cytidylate kinase (219 aa).

21 to 29 serves as a coordination point for ATP; that stretch reads GPAASGKGT.

This sequence belongs to the cytidylate kinase family. Type 1 subfamily.

It is found in the cytoplasm. The enzyme catalyses CMP + ATP = CDP + ADP. The catalysed reaction is dCMP + ATP = dCDP + ADP. This Rickettsia felis (strain ATCC VR-1525 / URRWXCal2) (Rickettsia azadi) protein is Cytidylate kinase.